A 478-amino-acid polypeptide reads, in one-letter code: tRNA (guanine-N(7)-)-methyltransferase non-catalytic subunit TRM82 (478 aa).

4 WD repeats span residues 14–53, 73–113, 217–258, and 263–301; these read SSAD…VLDP, EQKF…GLQQ, GHVS…HIIE, and GHEE…LNEK.

This sequence belongs to the WD repeat TRM82 family. In terms of assembly, forms a heterodimer with the catalytic subunit TRM8.

Its subcellular location is the nucleus. It participates in tRNA modification; N(7)-methylguanine-tRNA biosynthesis. Required for the formation of N(7)-methylguanine at position 46 (m7G46) in tRNA. In the complex, it is required to stabilize and induce conformational changes of the catalytic subunit. The polypeptide is tRNA (guanine-N(7)-)-methyltransferase non-catalytic subunit TRM82 (Phaeosphaeria nodorum (strain SN15 / ATCC MYA-4574 / FGSC 10173) (Glume blotch fungus)).